Consider the following 127-residue polypeptide: LIM domain-containing protein 2 (127 aa).

M1 is modified (N-acetylmethionine). Positions 1–24 (MFQAAGAAQATPSHDAKGGGSSTV) are disordered. The 61-residue stretch at 38–98 (ETCAACQKTV…KPHFQQLFKS (61 aa)) folds into the LIM zinc-binding domain. Zn(2+) is bound by residues C40, C43, H61, C64, C67, C70, C88, and H91.

Interacts with ILK.

It localises to the cytoplasm. Its subcellular location is the nucleus. Its function is as follows. Acts as an activator of the protein-kinase ILK, thereby regulating cell motility. This chain is LIM domain-containing protein 2, found in Homo sapiens (Human).